Here is a 380-residue protein sequence, read N- to C-terminus: Cytochrome b (380 aa).

The next 4 membrane-spanning stretches (helical) occupy residues 33–53 (FGSL…FLAM), 77–98 (WLIR…YMHI), 113–133 (WNIG…GYVL), and 178–198 (FFAF…LHLL). Heme b-binding residues include H83 and H97. Heme b contacts are provided by H182 and H196. Position 201 (H201) interacts with a ubiquinone. A run of 4 helical transmembrane segments spans residues 226 to 246 (YKDL…ALFA), 288 to 308 (LGGV…PILH), 320 to 340 (LTQF…WIGG), and 347 to 367 (FIII…VLSP).

This sequence belongs to the cytochrome b family. The cytochrome bc1 complex contains 3 respiratory subunits (MT-CYB, CYC1 and UQCRFS1), 2 core proteins (UQCRC1 and UQCRC2) and probably 6 low-molecular weight proteins. Requires heme b as cofactor.

The protein localises to the mitochondrion inner membrane. Component of the ubiquinol-cytochrome c reductase complex (complex III or cytochrome b-c1 complex) that is part of the mitochondrial respiratory chain. The b-c1 complex mediates electron transfer from ubiquinol to cytochrome c. Contributes to the generation of a proton gradient across the mitochondrial membrane that is then used for ATP synthesis. In Oncorhynchus keta (Chum salmon), this protein is Cytochrome b (mt-cyb).